Here is a 67-residue protein sequence, read N- to C-terminus: Large ribosomal subunit protein bL35 (67 aa).

The disordered stretch occupies residues M1 to G20.

The protein belongs to the bacterial ribosomal protein bL35 family.

The protein is Large ribosomal subunit protein bL35 of Anaeromyxobacter dehalogenans (strain 2CP-1 / ATCC BAA-258).